A 121-amino-acid chain; its full sequence is Large ribosomal subunit protein eL18 (121 aa).

It belongs to the eukaryotic ribosomal protein eL18 family.

This chain is Large ribosomal subunit protein eL18, found in Methanocaldococcus jannaschii (strain ATCC 43067 / DSM 2661 / JAL-1 / JCM 10045 / NBRC 100440) (Methanococcus jannaschii).